Consider the following 209-residue polypeptide: Potassium-transporting ATPase KdpC subunit (209 aa).

A helical transmembrane segment spans residues 10–30; that stretch reads VISLVFLFVLGFLFPTVTSLI.

Belongs to the KdpC family. As to quaternary structure, the system is composed of three essential subunits: KdpA, KdpB and KdpC.

It is found in the cell membrane. Its function is as follows. Part of the high-affinity ATP-driven potassium transport (or Kdp) system, which catalyzes the hydrolysis of ATP coupled with the electrogenic transport of potassium into the cytoplasm. This subunit acts as a catalytic chaperone that increases the ATP-binding affinity of the ATP-hydrolyzing subunit KdpB by the formation of a transient KdpB/KdpC/ATP ternary complex. In Thermoplasma volcanium (strain ATCC 51530 / DSM 4299 / JCM 9571 / NBRC 15438 / GSS1), this protein is Potassium-transporting ATPase KdpC subunit.